The following is a 102-amino-acid chain: Small ribosomal subunit protein uS10 (102 aa).

Belongs to the universal ribosomal protein uS10 family. As to quaternary structure, part of the 30S ribosomal subunit.

In terms of biological role, involved in the binding of tRNA to the ribosomes. This chain is Small ribosomal subunit protein uS10, found in Oenococcus oeni (strain ATCC BAA-331 / PSU-1).